Reading from the N-terminus, the 970-residue chain is Type III restriction-modification enzyme EcoP15I Res subunit (970 aa).

The helicase-like domain stretch occupies residues A75 to V540. T91, G122, F126, and D226 together coordinate AMP. The endonuclease domain stretch occupies residues T894–K918.

It belongs to the type III restriction-modification system Res protein family. A heterotetramer with stoichiometry Res(2)Mod(2). A heterotrimer with stoichiometry Res(1)Mod(2). The cofactor is Mg(2+). S-adenosyl-L-methionine serves as cofactor.

The enzyme catalyses Endonucleolytic cleavage of DNA to give specific double-stranded fragments with terminal 5'-phosphates.. In terms of biological role, a type III restriction enzyme that recognizes 2 inversely oriented double-stranded sequences 5'-CAGCAG-3' and cleaves DNA 25-27 base pairs downstream of one site. DNA restriction requires both the Res and Mod subunits. DNA topology affects its action; relaxed and negatively supercoiled DNA are digested but positively supercoiled DNA is not a good substrate. Interacts with DNA approximately one half-turn downstream of the recognition site. After binding to one recognition site undergoes random one-dimensional diffusion along DNA until it collides with a stationary enzyme bound to the second DNA site, which is when DNA cleavage occurs. The polypeptide is Type III restriction-modification enzyme EcoP15I Res subunit (Escherichia coli).